The chain runs to 283 residues: Putative pyruvate, phosphate dikinase regulatory protein (283 aa).

ADP is bound at residue 154–161 (GVSRTSKT).

Belongs to the pyruvate, phosphate/water dikinase regulatory protein family. PDRP subfamily.

It carries out the reaction N(tele)-phospho-L-histidyl/L-threonyl-[pyruvate, phosphate dikinase] + ADP = N(tele)-phospho-L-histidyl/O-phospho-L-threonyl-[pyruvate, phosphate dikinase] + AMP + H(+). The catalysed reaction is N(tele)-phospho-L-histidyl/O-phospho-L-threonyl-[pyruvate, phosphate dikinase] + phosphate + H(+) = N(tele)-phospho-L-histidyl/L-threonyl-[pyruvate, phosphate dikinase] + diphosphate. Bifunctional serine/threonine kinase and phosphorylase involved in the regulation of the pyruvate, phosphate dikinase (PPDK) by catalyzing its phosphorylation/dephosphorylation. The polypeptide is Putative pyruvate, phosphate dikinase regulatory protein (Afipia carboxidovorans (strain ATCC 49405 / DSM 1227 / KCTC 32145 / OM5) (Oligotropha carboxidovorans)).